A 500-amino-acid chain; its full sequence is Aspartyl/glutamyl-tRNA(Asn/Gln) amidotransferase subunit B (500 aa).

Belongs to the GatB/GatE family. GatB subfamily. Heterotrimer of A, B and C subunits.

The enzyme catalyses L-glutamyl-tRNA(Gln) + L-glutamine + ATP + H2O = L-glutaminyl-tRNA(Gln) + L-glutamate + ADP + phosphate + H(+). The catalysed reaction is L-aspartyl-tRNA(Asn) + L-glutamine + ATP + H2O = L-asparaginyl-tRNA(Asn) + L-glutamate + ADP + phosphate + 2 H(+). In terms of biological role, allows the formation of correctly charged Asn-tRNA(Asn) or Gln-tRNA(Gln) through the transamidation of misacylated Asp-tRNA(Asn) or Glu-tRNA(Gln) in organisms which lack either or both of asparaginyl-tRNA or glutaminyl-tRNA synthetases. The reaction takes place in the presence of glutamine and ATP through an activated phospho-Asp-tRNA(Asn) or phospho-Glu-tRNA(Gln). This Rhizobium leguminosarum bv. trifolii (strain WSM2304) protein is Aspartyl/glutamyl-tRNA(Asn/Gln) amidotransferase subunit B.